A 277-amino-acid polypeptide reads, in one-letter code: Protein EURL homolog (277 aa).

A disordered region spans residues 173-201; sequence LGLWPGERPQNREQRDSRQRRHSGHSREE. Positions 197–229 form a coiled coil; the sequence is HSREELMRKNVEELRQLNEQLLLQIQNVFEELS.

This sequence belongs to the EURL family.

Its function is as follows. Plays a role in cortical progenitor cell proliferation and differentiation. May promote dendritic spine development of post-migratory cortical projection neurons by modulating the beta-catenin signaling pathway. The protein is Protein EURL homolog of Danio rerio (Zebrafish).